A 133-amino-acid chain; its full sequence is Ribosome-binding factor A (133 aa).

This sequence belongs to the RbfA family. In terms of assembly, monomer. Binds 30S ribosomal subunits, but not 50S ribosomal subunits or 70S ribosomes.

The protein resides in the cytoplasm. In terms of biological role, one of several proteins that assist in the late maturation steps of the functional core of the 30S ribosomal subunit. Associates with free 30S ribosomal subunits (but not with 30S subunits that are part of 70S ribosomes or polysomes). Required for efficient processing of 16S rRNA. May interact with the 5'-terminal helix region of 16S rRNA. This is Ribosome-binding factor A from Cytophaga hutchinsonii (strain ATCC 33406 / DSM 1761 / CIP 103989 / NBRC 15051 / NCIMB 9469 / D465).